Reading from the N-terminus, the 143-residue chain is Aspartate 1-decarboxylase (143 aa).

Catalysis depends on Ser-25, which acts as the Schiff-base intermediate with substrate; via pyruvic acid. Ser-25 bears the Pyruvic acid (Ser) mark. Thr-57 is a substrate binding site. Catalysis depends on Tyr-58, which acts as the Proton donor. Gly-73 to Ala-75 contacts substrate.

It belongs to the PanD family. As to quaternary structure, heterooctamer of four alpha and four beta subunits. It depends on pyruvate as a cofactor. In terms of processing, is synthesized initially as an inactive proenzyme, which is activated by self-cleavage at a specific serine bond to produce a beta-subunit with a hydroxyl group at its C-terminus and an alpha-subunit with a pyruvoyl group at its N-terminus.

The protein localises to the cytoplasm. The enzyme catalyses L-aspartate + H(+) = beta-alanine + CO2. It participates in cofactor biosynthesis; (R)-pantothenate biosynthesis; beta-alanine from L-aspartate: step 1/1. Functionally, catalyzes the pyruvoyl-dependent decarboxylation of aspartate to produce beta-alanine. The sequence is that of Aspartate 1-decarboxylase from Mycolicibacterium paratuberculosis (strain ATCC BAA-968 / K-10) (Mycobacterium paratuberculosis).